A 168-amino-acid polypeptide reads, in one-letter code: Iron-sulfur cluster assembly enzyme ISCU (168 aa).

Residues M1–L35 constitute a mitochondrion transit peptide. Residue S15 is modified to Phosphoserine. C70 acts as the Cysteine persulfide intermediate in catalysis. Cysteine persulfide is present on C70. Residues D72, C96, and C139 each contribute to the Zn(2+) site. C139 functions as the Cysteine persulfide intermediate in the catalytic mechanism. C139 bears the Cysteine persulfide mark.

It belongs to the NifU family. As to quaternary structure, homodimer; Tyr-36-mediated dimerization of two iron- and sulfide-containing ISCU subunit bind to the cysteine desulfurase complex. Component of the mitochondrial core iron-sulfur cluster (ISC) complex composed of NFS1, LYRM4, NDUFAB1, ISCU, FXN, and FDX2; this complex is a heterohexamer containing two copies of each monomer. Interacts (D-state) with NFS1 (homodimer form); each monomer interacts with the C-terminal regions of each NFS1 monomer. Interacts (monomer form) with FXN (via ferrous form); the interaction is possible when both are bound to the dimeric form of the cysteine desulfurase complex (NFS1:LYRM4) and enhances FXN interaction to the dimeric form of the cysteine desulfurase complex (NFS1:LYRM4). Interacts with GLRX5. Interacts (D-state) with HSPA9. Interacts (S-state) with HSCB; this interaction stimulates the ATPase activity of HSPA9. Component of a complex composed of FXN, NFS1, LYRM4 and ISCU. Post-translationally, cysteine persulfide is reduced by thiol-containing molecules such as glutathione and L-cysteine. In terms of processing, phosphorylation at Ser-15 is required for ISCU protein stabilization in the cytosol, whereas dephosphorylation of Ser-15, due to the inhibition of mTORC1 (mammalian target of rapamycin complex 1) complex, leads to degradation of the precursor form and ultimately to a decrease in the mitochondrial mature form.

It localises to the mitochondrion. Functionally, mitochondrial scaffold protein, of the core iron-sulfur cluster (ISC) assembly complex, that provides the structural architecture on which the [2Fe-2S] clusters are assembled. The core iron-sulfur cluster (ISC) assembly complex is involved in the de novo synthesis of a [2Fe-2S] cluster, the first step of the mitochondrial iron-sulfur protein biogenesis. This process is initiated by the cysteine desulfurase complex (NFS1:LYRM4:NDUFAB1) that produces persulfide which is delivered on the scaffold protein ISCU in a FXN-dependent manner. Then this complex is stabilized by FDX2 which provides reducing equivalents to accomplish the [2Fe-2S] cluster assembly. Finally, the [2Fe-2S] cluster is transferred from ISCU to chaperone proteins, including HSCB, HSPA9 and GLRX5. Exists as two slow interchanging conformational states, a structured (S) and disordered (D) form. May modulate NFS1 desulfurase activity in a zinc-dependent manner. Modulates the interaction between FXN and the cysteine desulfurase complex. This chain is Iron-sulfur cluster assembly enzyme ISCU, found in Mus musculus (Mouse).